Here is an 829-residue protein sequence, read N- to C-terminus: Periplasmic nitrate reductase (829 aa).

The tat-type signal signal peptide spans 1-30 (MKLSRRDFMKANAVAAAAAVAGVSAPTLAA). Residues 41–97 (IKWDKAPCRFCGTGCSVLVGSQDGRVVATQGDPDAPVNRGLNCIKGYFLSKIMYGED) enclose the 4Fe-4S Mo/W bis-MGD-type domain. Positions 48, 51, 55, and 83 each coordinate [4Fe-4S] cluster. Residues Lys85, Gln152, Asn177, Cys181, 214 to 221 (WGSNMAEM), 245 to 249 (STFEH), 264 to 266 (QTD), Met374, Gln378, Asn484, 510 to 511 (SD), Lys533, Asp560, and 719 to 728 (TGRVLEHWHT) contribute to the Mo-bis(molybdopterin guanine dinucleotide) site. Phe795 contacts substrate. Mo-bis(molybdopterin guanine dinucleotide) contacts are provided by Asn803 and Lys820.

Belongs to the prokaryotic molybdopterin-containing oxidoreductase family. NasA/NapA/NarB subfamily. Component of the periplasmic nitrate reductase NapAB complex composed of NapA and NapB. [4Fe-4S] cluster serves as cofactor. The cofactor is Mo-bis(molybdopterin guanine dinucleotide). Post-translationally, predicted to be exported by the Tat system. The position of the signal peptide cleavage has not been experimentally proven.

Its subcellular location is the periplasm. It carries out the reaction 2 Fe(II)-[cytochrome] + nitrate + 2 H(+) = 2 Fe(III)-[cytochrome] + nitrite + H2O. Catalytic subunit of the periplasmic nitrate reductase complex NapAB. Receives electrons from NapB and catalyzes the reduction of nitrate to nitrite. The protein is Periplasmic nitrate reductase of Aeromonas salmonicida (strain A449).